The primary structure comprises 275 residues: Ribosomal RNA small subunit methyltransferase A (275 aa).

The S-adenosyl-L-methionine site is built by Asn-20, Leu-22, Gly-47, Glu-68, Asp-90, and Asn-110.

The protein belongs to the class I-like SAM-binding methyltransferase superfamily. rRNA adenine N(6)-methyltransferase family. RsmA subfamily.

It is found in the cytoplasm. It carries out the reaction adenosine(1518)/adenosine(1519) in 16S rRNA + 4 S-adenosyl-L-methionine = N(6)-dimethyladenosine(1518)/N(6)-dimethyladenosine(1519) in 16S rRNA + 4 S-adenosyl-L-homocysteine + 4 H(+). Functionally, specifically dimethylates two adjacent adenosines (A1518 and A1519) in the loop of a conserved hairpin near the 3'-end of 16S rRNA in the 30S particle. May play a critical role in biogenesis of 30S subunits. This Chlorobaculum tepidum (strain ATCC 49652 / DSM 12025 / NBRC 103806 / TLS) (Chlorobium tepidum) protein is Ribosomal RNA small subunit methyltransferase A.